A 495-amino-acid polypeptide reads, in one-letter code: MFRQWLTLVIIVLVYIPVAIDATVLHVAAPTLSMTLGASGNELLWIIDIYSLVMAGMVLPMGALGDRIGFKRLLMLGGTLFGLASLAAAFSHTASWLIATRVLLAIGAAMIVPATLAGIRATFCEEKHRNMALGVWAAVGSGGAAFGPLIGGILLEHFYWGSVFLINVPIVLVVMGLTARYVPRQAGRRDQPLNLGHAVMLIIAILLLVYSAKTALKGHLSLWVISFTLLTGALLLGLFIRTQLATSRPMIDMRLFTHRIILSGVVMAMTAMITLVGFELLMAQELQFVHGLSPYEAGVFMLPVMVASGFSGPIAGVLVSRLGLRLVATGGMALSALSFYGLAMTDFSTQQWQAWGLMALLGFSAASALLASTSAIMAAAPAEKAAAAGAIETMAYELGAGLGIAIFGLLLSRSFSASIRLPAGLEAQEIARASSSMGEAVQLANSLPPTQGQAILDAARHAFIWSHSVALSSAGSMLLLLAVGMWFSLAKAQRR.

The next 14 helical transmembrane spans lie at Trp-5 to Leu-25, Leu-44 to Leu-64, Leu-73 to Thr-93, Trp-96 to Leu-116, Val-135 to Leu-155, Phe-158 to Thr-178, Pro-192 to Ala-212, Leu-220 to Ile-240, Ile-260 to Leu-280, Val-299 to Val-319, Val-327 to Phe-347, Leu-357 to Met-377, Ile-391 to Leu-411, and Val-469 to Leu-489.

Belongs to the major facilitator superfamily. TCR/Tet family.

Its subcellular location is the cell inner membrane. In terms of biological role, major efflux pump for acriflavine and other quaternary ammonium compounds (QACs). Also required for resistance to methyl viologen. The sequence is that of Methyl viologen resistance protein SmvA (smvA) from Salmonella typhimurium (strain LT2 / SGSC1412 / ATCC 700720).